A 65-amino-acid polypeptide reads, in one-letter code: Large ribosomal subunit protein bL35 (65 aa).

The protein belongs to the bacterial ribosomal protein bL35 family.

This is Large ribosomal subunit protein bL35 from Burkholderia ambifaria (strain MC40-6).